The sequence spans 435 residues: ATP-dependent protease ATPase subunit HslU (435 aa).

Residues Ile-18, 60–65 (GVGKTE), Asp-248, Glu-313, and Arg-385 contribute to the ATP site.

This sequence belongs to the ClpX chaperone family. HslU subfamily. As to quaternary structure, a double ring-shaped homohexamer of HslV is capped on each side by a ring-shaped HslU homohexamer. The assembly of the HslU/HslV complex is dependent on binding of ATP.

It is found in the cytoplasm. Its function is as follows. ATPase subunit of a proteasome-like degradation complex; this subunit has chaperone activity. The binding of ATP and its subsequent hydrolysis by HslU are essential for unfolding of protein substrates subsequently hydrolyzed by HslV. HslU recognizes the N-terminal part of its protein substrates and unfolds these before they are guided to HslV for hydrolysis. The sequence is that of ATP-dependent protease ATPase subunit HslU from Rhizobium leguminosarum bv. trifolii (strain WSM2304).